We begin with the raw amino-acid sequence, 396 residues long: Ribosomal RNA large subunit methyltransferase I (396 aa).

Residues 2–81 (TVRLILAKGR…ESIDIDFFVR (80 aa)) enclose the PUA domain.

Belongs to the methyltransferase superfamily. RlmI family.

The protein localises to the cytoplasm. It catalyses the reaction cytidine(1962) in 23S rRNA + S-adenosyl-L-methionine = 5-methylcytidine(1962) in 23S rRNA + S-adenosyl-L-homocysteine + H(+). Functionally, specifically methylates the cytosine at position 1962 (m5C1962) of 23S rRNA. The protein is Ribosomal RNA large subunit methyltransferase I of Erwinia tasmaniensis (strain DSM 17950 / CFBP 7177 / CIP 109463 / NCPPB 4357 / Et1/99).